A 965-amino-acid polypeptide reads, in one-letter code: Vacuolar membrane protease (965 aa).

The Cytoplasmic portion of the chain corresponds to 1 to 16; the sequence is MARPSLSPSNPLGFTP. A helical membrane pass occupies residues 17–37; it reads WPVTVITAVVYLALVVPLLVV. At 38–387 the chain is on the vacuolar side; that stretch reads HHVVPSAPSS…SAFVVFELHT (350 aa). Residues asparagine 53 and asparagine 119 are each glycosylated (N-linked (GlcNAc...) asparagine). Zn(2+) contacts are provided by histidine 171 and aspartate 183. The Proton acceptor role is filled by glutamate 217. Residues glutamate 218, glutamate 243, and histidine 316 each coordinate Zn(2+). A helical membrane pass occupies residues 388–408; that stretch reads LFALSVTLLVVAPLVLLVTSI. Over 409-441 the chain is Cytoplasmic; the sequence is ALARADKMYLFRSSASPEDSDGSEVVPLHGVRG. The helical transmembrane segment at 442–462 threads the bilayer; sequence FFRFPFLLVIPTAVTVGLAYL. Topologically, residues 463-472 are vacuolar; that stretch reads VTKFNPYIIH. The chain crosses the membrane as a helical span at residues 473 to 493; it reads SSEYAVWSMMISAWVFLAWFV. Residues 494–507 are Cytoplasmic-facing; that stretch reads SRVADFARPSAFHR. Residues 508–528 traverse the membrane as a helical segment; that stretch reads VYTLTWLFLVEWVFLVISTVY. Over 529–532 the chain is Vacuolar; the sequence is ENQY. The chain crosses the membrane as a helical span at residues 533–553; sequence GLAGGYFVLFVFAGTFLATWI. At 554-661 the chain is on the cytoplasmic side; sequence SYLELFALPR…WSIHLPKWVW (108 aa). Positions 577–610 are disordered; that stretch reads RTSSHGSRLGTASGEDVEDGEDEDDDGTTAEATE. The segment covering 591–604 has biased composition (acidic residues); the sequence is EDVEDGEDEDDDGT. A helical membrane pass occupies residues 662–682; it reads VLQFLLTAPLVLIFVGPLALL. Over 683–698 the chain is Vacuolar; it reads LTSALRQTGQDGSPSL. The helical transmembrane segment at 699–719 threads the bilayer; the sequence is FIYIAVAALTTLLFIPLLPFI. Residues 720–725 lie on the Cytoplasmic side of the membrane; that stretch reads HRYTHH. Residues 726–746 form a helical membrane-spanning segment; that stretch reads IPLFLLCVFAGTLIYNLVAFP. Over 747–965 the chain is Vacuolar; that stretch reads FSPANRLKLF…LVEGSRRFEV (219 aa). Asparagine 793 and asparagine 830 each carry an N-linked (GlcNAc...) asparagine glycan.

This sequence belongs to the peptidase M28 family. The cofactor is Zn(2+).

It localises to the vacuole membrane. May be involved in vacuolar sorting and osmoregulation. The sequence is that of Vacuolar membrane protease from Aspergillus fumigatus (strain CBS 144.89 / FGSC A1163 / CEA10) (Neosartorya fumigata).